The chain runs to 252 residues: ATP synthase subunit a (252 aa).

6 consecutive transmembrane segments (helical) span residues 29–49, 87–107, 117–137, 146–166, 188–208, and 211–231; these read FTNSALFMVATVVVAAAFLFL, FFPLVFSLFMFVLVANLLGLF, IIVTFGLAILVIGTVIVYGFM, LFVPKGVPLVMMVLVVPIEVI, ITLKVFSGFVVSLSALGAVGV, and SILPLAMAVALTALELLVAFL.

The protein belongs to the ATPase A chain family. In terms of assembly, F-type ATPases have 2 components, CF(1) - the catalytic core - and CF(0) - the membrane proton channel. CF(1) has five subunits: alpha(3), beta(3), gamma(1), delta(1), epsilon(1). CF(0) has three main subunits: a(1), b(2) and c(9-12). The alpha and beta chains form an alternating ring which encloses part of the gamma chain. CF(1) is attached to CF(0) by a central stalk formed by the gamma and epsilon chains, while a peripheral stalk is formed by the delta and b chains.

Its subcellular location is the cell inner membrane. Functionally, key component of the proton channel; it plays a direct role in the translocation of protons across the membrane. The polypeptide is ATP synthase subunit a (Mesorhizobium japonicum (strain LMG 29417 / CECT 9101 / MAFF 303099) (Mesorhizobium loti (strain MAFF 303099))).